Reading from the N-terminus, the 153-residue chain is Ribosomal RNA large subunit methyltransferase H (153 aa).

S-adenosyl-L-methionine contacts are provided by residues Leu-70, Gly-102, and 121–126; that span reads LSRMTF.

This sequence belongs to the RNA methyltransferase RlmH family. In terms of assembly, homodimer.

Its subcellular location is the cytoplasm. It catalyses the reaction pseudouridine(1915) in 23S rRNA + S-adenosyl-L-methionine = N(3)-methylpseudouridine(1915) in 23S rRNA + S-adenosyl-L-homocysteine + H(+). Specifically methylates the pseudouridine at position 1915 (m3Psi1915) in 23S rRNA. This chain is Ribosomal RNA large subunit methyltransferase H, found in Geotalea uraniireducens (strain Rf4) (Geobacter uraniireducens).